The following is a 334-amino-acid chain: FAD:protein FMN transferase (334 aa).

Residues 1–16 form the signal peptide; that stretch reads MRNWLVALASLLLLAG. The N-palmitoyl cysteine moiety is linked to residue Cys17. Cys17 is lipidated: S-diacylglycerol cysteine. Residues Met31, Tyr69, 110 to 112, and Asp168 each bind FAD; that span reads ALD. Thr171 is a binding site for Mg(2+). Residues Lys174 and Ile259 each contribute to the FAD site. Mg(2+)-binding residues include Asp285 and Thr289.

This sequence belongs to the ApbE family. Mg(2+) is required as a cofactor.

It is found in the cell inner membrane. The catalysed reaction is L-threonyl-[protein] + FAD = FMN-L-threonyl-[protein] + AMP + H(+). Functionally, flavin transferase that catalyzes the transfer of the FMN moiety of FAD and its covalent binding to the hydroxyl group of a threonine residue in a target flavoprotein such as NqrB and NqrC, two subunits of the NQR complex. Cannot use directly FMN instead of FAD as substrate. The polypeptide is FAD:protein FMN transferase (Vibrio cholerae serotype O1 (strain ATCC 39541 / Classical Ogawa 395 / O395)).